A 106-amino-acid chain; its full sequence is NADH-quinone oxidoreductase subunit K (106 aa).

The next 3 helical transmembrane spans lie at 10–30 (IHYY…GVMV), 35–55 (VLIF…FVTF), and 67–87 (VVFF…AIVI).

This sequence belongs to the complex I subunit 4L family. In terms of assembly, NDH-1 is composed of 14 different subunits. Subunits NuoA, H, J, K, L, M, N constitute the membrane sector of the complex.

Its subcellular location is the cell inner membrane. It carries out the reaction a quinone + NADH + 5 H(+)(in) = a quinol + NAD(+) + 4 H(+)(out). Functionally, NDH-1 shuttles electrons from NADH, via FMN and iron-sulfur (Fe-S) centers, to quinones in the respiratory chain. The immediate electron acceptor for the enzyme in this species is believed to be ubiquinone. Couples the redox reaction to proton translocation (for every two electrons transferred, four hydrogen ions are translocated across the cytoplasmic membrane), and thus conserves the redox energy in a proton gradient. The protein is NADH-quinone oxidoreductase subunit K of Leptospira interrogans serogroup Icterohaemorrhagiae serovar copenhageni (strain Fiocruz L1-130).